A 190-amino-acid polypeptide reads, in one-letter code: MDRTEQKSIIEGLLFVSGDEGIYPEQIAKVLEIEGNEVIDILEEMQKECEGAHRGLQIVQYAKVYRFATKKEHASYYQKLIEIPTAASLSQAALETLAIVAYRQPITRTEMEEIRGVKTDKALQTLVSHLLIKEMGRAEGPGRPILYGTTKEFLDTFGLKTLDDLPPLSEENEQMNEADLFFGSLQEISK.

Belongs to the ScpB family. As to quaternary structure, homodimer. Homodimerization may be required to stabilize the binding of ScpA to the Smc head domains. Component of a cohesin-like complex composed of ScpA, ScpB and the Smc homodimer, in which ScpA and ScpB bind to the head domain of Smc. The presence of the three proteins is required for the association of the complex with DNA.

Its subcellular location is the cytoplasm. Its function is as follows. Participates in chromosomal partition during cell division. May act via the formation of a condensin-like complex containing Smc and ScpA that pull DNA away from mid-cell into both cell halves. The polypeptide is Segregation and condensation protein B (Bacillus thuringiensis subsp. konkukian (strain 97-27)).